Consider the following 328-residue polypeptide: Beta-ketoacyl-[acyl-carrier-protein] synthase III (328 aa).

Residues C113 and H252 contribute to the active site. Positions 253–257 are ACP-binding; sequence QANLR. Residue N282 is part of the active site.

Belongs to the thiolase-like superfamily. FabH family. In terms of assembly, homodimer.

It localises to the cytoplasm. The enzyme catalyses malonyl-[ACP] + acetyl-CoA + H(+) = 3-oxobutanoyl-[ACP] + CO2 + CoA. Its pathway is lipid metabolism; fatty acid biosynthesis. Catalyzes the condensation reaction of fatty acid synthesis by the addition to an acyl acceptor of two carbons from malonyl-ACP. Catalyzes the first condensation reaction which initiates fatty acid synthesis and may therefore play a role in governing the total rate of fatty acid production. Possesses both acetoacetyl-ACP synthase and acetyl transacylase activities. Its substrate specificity determines the biosynthesis of branched-chain and/or straight-chain of fatty acids. This chain is Beta-ketoacyl-[acyl-carrier-protein] synthase III, found in Campylobacter fetus subsp. fetus (strain 82-40).